Here is a 363-residue protein sequence, read N- to C-terminus: Glutamate 5-kinase (363 aa).

Position 3 (Lys-3) interacts with ATP. Ser-43, Asp-128, and Asn-140 together coordinate substrate. ATP-binding positions include 160–161 and 202–208; these read TD and TGGMRTK. One can recognise a PUA domain in the interval 267–349; the sequence is AGAILIDDGA…REIENVLGYS (83 aa).

The protein belongs to the glutamate 5-kinase family.

It is found in the cytoplasm. The enzyme catalyses L-glutamate + ATP = L-glutamyl 5-phosphate + ADP. It functions in the pathway amino-acid biosynthesis; L-proline biosynthesis; L-glutamate 5-semialdehyde from L-glutamate: step 1/2. Its function is as follows. Catalyzes the transfer of a phosphate group to glutamate to form L-glutamate 5-phosphate. In Xanthomonas axonopodis pv. citri (strain 306), this protein is Glutamate 5-kinase.